Here is a 377-residue protein sequence, read N- to C-terminus: Putative glutamate--cysteine ligase 2 (377 aa).

The protein belongs to the glutamate--cysteine ligase type 2 family. YbdK subfamily.

It catalyses the reaction L-cysteine + L-glutamate + ATP = gamma-L-glutamyl-L-cysteine + ADP + phosphate + H(+). Its function is as follows. ATP-dependent carboxylate-amine ligase which exhibits weak glutamate--cysteine ligase activity. This Ralstonia pickettii (strain 12J) protein is Putative glutamate--cysteine ligase 2.